A 279-amino-acid chain; its full sequence is uncharacterized protein (279 aa).

The disordered stretch occupies residues 136 to 279; that stretch reads TSNATEASEK…FTSDSSDEED (144 aa). Residues 228 to 238 are compositionally biased toward low complexity; the sequence is NNGNGAVYSDS.

This is an uncharacterized protein from Invertebrate iridescent virus 3 (IIV-3).